A 131-amino-acid polypeptide reads, in one-letter code: MAVQKNKKTRRRKEKKNIEHGCAHIKSTFNNSIVTITDVNGNALSWSSAGGLGFKGSRKSTPFAAQMAAETAAKTAMEHGLKSVDVFVKGPGSGREAAIRSLQAAGLEVTLIKDVTPIPHNGCRPPKRRRV.

This sequence belongs to the universal ribosomal protein uS11 family. In terms of assembly, part of the 30S ribosomal subunit. Interacts with proteins S7 and S18. Binds to IF-3.

Located on the platform of the 30S subunit, it bridges several disparate RNA helices of the 16S rRNA. Forms part of the Shine-Dalgarno cleft in the 70S ribosome. In Clostridium acetobutylicum (strain ATCC 824 / DSM 792 / JCM 1419 / IAM 19013 / LMG 5710 / NBRC 13948 / NRRL B-527 / VKM B-1787 / 2291 / W), this protein is Small ribosomal subunit protein uS11.